A 365-amino-acid polypeptide reads, in one-letter code: Pyruvate dehydrogenase E1 component subunit beta, mitochondrial (365 aa).

A mitochondrion-targeting transit peptide spans 1–24 (MLRTRLIQAASSAQRAFSTSQKAL). Glu-85 contacts thiamine diphosphate. The K(+) site is built by Ile-138, Ala-186, Ile-187, and Asp-189.

It depends on thiamine diphosphate as a cofactor. As to expression, expressed in salivary glands (at protein level).

The protein localises to the mitochondrion matrix. It catalyses the reaction N(6)-[(R)-lipoyl]-L-lysyl-[protein] + pyruvate + H(+) = N(6)-[(R)-S(8)-acetyldihydrolipoyl]-L-lysyl-[protein] + CO2. In terms of biological role, the pyruvate dehydrogenase complex catalyzes the overall conversion of pyruvate to acetyl-CoA and CO(2). Might play a role in regulating synapse structure formation at neuromuscular junctions. Might play a role in maintenance of mitochondrial morphology. This Drosophila melanogaster (Fruit fly) protein is Pyruvate dehydrogenase E1 component subunit beta, mitochondrial.